We begin with the raw amino-acid sequence, 210 residues long: MIKQPALAQEQYACVYAWLALLFFREVDDEGLIQLQSAEIADWLALLKRQPALAASVALLEQKIAALSLRQDAQLELAADFCGLFLMTDKKSALPYASQYPQQEPGMIKHLLLEAGMEVNDDFKEPADHLAIYLELLSHLHFSLGESFQQRRMNKLRQKTLSSLLEWLPEFTNNCLKHDPYGFYAALSQLLLAIVRFDDGKEDLSIVAAE.

The protein belongs to the TorD/DmsD family. TorD subfamily.

It localises to the cytoplasm. Involved in the biogenesis of TorA. Acts on TorA before the insertion of the molybdenum cofactor and, as a result, probably favors a conformation of the apoenzyme that is competent for acquiring the cofactor. This chain is Chaperone protein TorD, found in Salmonella choleraesuis (strain SC-B67).